The primary structure comprises 911 residues: General transcription factor 3C polypeptide 2 (911 aa).

Disordered stretches follow at residues 34 to 187 (LDVK…RRRA) and 205 to 297 (ALPA…MAPN). Polar residues predominate over residues 35–46 (DVKTSSEMTSAE). A Phosphoserine modification is found at Ser-63. Residues 64–81 (PDQRRLPPEQESLSRLEQ) show a composition bias toward basic and acidic residues. Positions 92-112 (SKPRASKPGRKRGGRTRKGPK) are enriched in basic residues. Over residues 114–123 (PQQPNPPSAP) the composition is skewed to pro residues. Ser-132, Ser-165, Ser-167, Ser-220, and Ser-260 each carry phosphoserine. Acidic residues predominate over residues 253-262 (EAEDVEESEG). The span at 263 to 275 (PSESSSEPEPAVP) shows a compositional bias: low complexity. WD repeat units follow at residues 465-521 (CDNG…ALLA) and 552-593 (SECG…PLQR). Ser-597 carries the phosphoserine modification. A WD 3 repeat occupies 611–651 (AHDQAVRTLQWCKANSHFLASAGSDRKIKFWDLRRPYEPIN). The interval 765 to 785 (SPEGPDHSSASSGVPNPPKAR) is disordered. A WD 4 repeat occupies 832-874 (LQLEAIHKVRFSPNLDSYGWLVSGGQSGLVRIHFVRGLASPLG). Phosphoserine is present on residues Ser-871, Ser-892, and Ser-893. The segment at 889 to 911 (FQPSSPTRRPGFSPTSHRLLPTP) is disordered. A Phosphothreonine modification is found at Thr-895. The residue at position 901 (Ser-901) is a Phosphoserine.

In terms of assembly, part of the TFIIIC subcomplex TFIIIC2, consisting of six subunits, GTF3C1, GTF3C2, GTF3C3, GTF3C4, GTF3C5 and GTF3C6.

The protein localises to the nucleus. Functionally, required for RNA polymerase III-mediated transcription. Component of TFIIIC that initiates transcription complex assembly on tRNA and is required for transcription of 5S rRNA and other stable nuclear and cytoplasmic RNAs. May play a direct role in stabilizing interactions of TFIIIC2 with TFIIIC1. This Pongo abelii (Sumatran orangutan) protein is General transcription factor 3C polypeptide 2 (GTF3C2).